The sequence spans 778 residues: Endonuclease MutS2 (778 aa).

Position 328-335 (328-335 (GPNTGGKT)) interacts with ATP. Residues 702-777 (LDLRGKRYEE…GSGATIVTFK (76 aa)) form the Smr domain.

The protein belongs to the DNA mismatch repair MutS family. MutS2 subfamily. As to quaternary structure, homodimer. Binds to stalled ribosomes, contacting rRNA.

Functionally, endonuclease that is involved in the suppression of homologous recombination and thus may have a key role in the control of bacterial genetic diversity. In terms of biological role, acts as a ribosome collision sensor, splitting the ribosome into its 2 subunits. Detects stalled/collided 70S ribosomes which it binds and splits by an ATP-hydrolysis driven conformational change. Acts upstream of the ribosome quality control system (RQC), a ribosome-associated complex that mediates the extraction of incompletely synthesized nascent chains from stalled ribosomes and their subsequent degradation. Probably generates substrates for RQC. This is Endonuclease MutS2 from Streptococcus pneumoniae (strain CGSP14).